Here is a 199-residue protein sequence, read N- to C-terminus: MSKPQNPVQMAVIGAAHGIKGELRVKTFTGEPMALADYGPLYARDGRAFQITDIRPANTVVVVRFKGISDRNAAEALAGTELFVDRSMLPDDGEEDEFYHADLVGLEVRDDTGTALGKVVAVHNFGGGDILDVTLAGRKGVLIPFTQAAVPDVSVAEGFVRVDPVAAGLVEDEDGDAPREEDFDPKGRPRGPRDAGGNR.

The region spanning 95-168 is the PRC barrel domain; the sequence is EDEFYHADLV…FVRVDPVAAG (74 aa). The segment at 167-199 is disordered; the sequence is AGLVEDEDGDAPREEDFDPKGRPRGPRDAGGNR. Positions 176 to 193 are enriched in basic and acidic residues; sequence DAPREEDFDPKGRPRGPR.

The protein belongs to the RimM family. Binds ribosomal protein uS19.

The protein resides in the cytoplasm. In terms of biological role, an accessory protein needed during the final step in the assembly of 30S ribosomal subunit, possibly for assembly of the head region. Essential for efficient processing of 16S rRNA. May be needed both before and after RbfA during the maturation of 16S rRNA. It has affinity for free ribosomal 30S subunits but not for 70S ribosomes. This Mesorhizobium japonicum (strain LMG 29417 / CECT 9101 / MAFF 303099) (Mesorhizobium loti (strain MAFF 303099)) protein is Ribosome maturation factor RimM.